The following is a 354-amino-acid chain: Lysine racemase (354 aa).

N6-(pyridoxal phosphate)lysine is present on K36.

Belongs to the alanine racemase family. Homodimer. The cofactor is pyridoxal 5'-phosphate.

It catalyses the reaction L-lysine = D-lysine. The enzyme catalyses L-ornithine = D-ornithine. It functions in the pathway cell wall biogenesis; peptidoglycan biosynthesis. In terms of biological role, catalyzes the interconversion of D-lysine and L-lysine. Has also high activity toward ornithine, and weaker activity toward alanine. Contributes to production of D-lysine and D-alanine for use as peptidoglycan components. This is Lysine racemase from Thermotoga maritima (strain ATCC 43589 / DSM 3109 / JCM 10099 / NBRC 100826 / MSB8).